The following is a 928-amino-acid chain: Neuropilin-1 (928 aa).

A signal peptide spans 1–21; that stretch reads MLLRLLSCCCWLLCSLRSSWA. The Extracellular portion of the chain corresponds to 22–860; that stretch reads SRNDKCGDTI…PGNVLKTLDP (839 aa). 3 disulfides stabilise this stretch: Cys27–Cys54, Cys82–Cys104, and Cys147–Cys173. CUB domains lie at 27–141 and 147–265; these read CGDT…YEVF and CSRN…FSVV. N-linked (GlcNAc...) asparagine glycosylation is present at Asn150. Ca(2+)-binding residues include Glu195, Asp209, and Asp250. Cysteines 206 and 228 form a disulfide. N-linked (GlcNAc...) asparagine glycans are attached at residues Asn261, Asn300, and Asn523. 2 disulfide bridges follow: Cys275/Cys424 and Cys431/Cys584. F5/8 type C domains are found at residues 275–424 and 431–584; these read CKEA…LYGC and CSRM…LLGC. Ser613 carries an O-linked (Xyl...) (chondroitin sulfate) serine; alternate glycan. O-linked (Xyl...) (heparan sulfate) serine; alternate glycosylation occurs at Ser613. Positions 624–645 are disordered; the sequence is GATGQSTETPTVEASPEEPDMT. Residues 625–635 are compositionally biased toward polar residues; it reads ATGQSTETPTV. One can recognise an MAM domain in the interval 646–812; sequence HSDLDCKFGW…NHISPSQCRA (167 aa). Ser834 carries O-linked (Xyl...) (chondroitin sulfate) serine glycosylation. Residue Asn844 is glycosylated (N-linked (GlcNAc...) asparagine). A helical membrane pass occupies residues 861 to 883; it reads ILITIIAMSALGVLLGAICGVVL. Residues 884 to 928 are Cytoplasmic-facing; sequence YCACWHNGMSERNLSALENYNFELVDGVKLKKDKLNTQNSYSEAS.

Belongs to the neuropilin family. As to quaternary structure, homodimer, and heterodimer. Retinal ganglion cells and visual center neurons.

Its subcellular location is the mitochondrion membrane. It localises to the cell membrane. Functionally, receptor involved in the development of the cardiovascular system, in angiogenesis, in the formation of certain neuronal circuits and in organogenesis outside the nervous system. Mediates the chemorepulsant activity of semaphorins. Binding to VEGFA initiates a signaling pathway needed for motor neuron axon guidance and cell body migration, including for the caudal migration of facial motor neurons from rhombomere 4 to rhombomere 6 during embryonic development. Regulates mitochondrial iron transport via interaction. This is Neuropilin-1 (nrp1) from Xenopus laevis (African clawed frog).